Reading from the N-terminus, the 149-residue chain is Calmodulin (149 aa).

Thr2 is modified (N-acetylthreonine). EF-hand domains lie at Glu8–Asn43, Pro44–Glu79, Asp81–Lys116, and Leu117–Lys149. Residues Asp21, Asp23, Asp25, Thr27, Glu32, Asp57, Asp59, Asn61, Thr63, Glu68, Asp94, Asp96, Asn98, and Glu105 each contribute to the Ca(2+) site. Lys116 is subject to N6,N6,N6-trimethyllysine. Asp130, Asp132, Asp134, Gln136, and Glu141 together coordinate Ca(2+).

Belongs to the calmodulin family.

Its function is as follows. Calmodulin mediates the control of a large number of enzymes, ion channels and other proteins by Ca(2+). Among the enzymes to be stimulated by the calmodulin-Ca(2+) complex are a number of protein kinases and phosphatases. The chain is Calmodulin from Halichondria okadai (Marine sponge).